A 344-amino-acid chain; its full sequence is Glutamine synthetase (344 aa).

The 83-residue stretch at 4–86 (YKLEYIWLDG…VMCEVMMPDG (83 aa)) folds into the GS beta-grasp domain. In terms of domain architecture, GS catalytic spans 89-344 (PHASNKRATI…SVPTEKKAVA (256 aa)). The Mg(2+) site is built by Glu109 and Glu111. Glu167 contributes to the ATP binding site. Mg(2+)-binding residues include Glu172 and Glu179. L-glutamate is bound at residue Glu278.

Belongs to the glutamine synthetase family. In terms of assembly, homooctamer and homotetramer. It depends on Mg(2+) as a cofactor.

The protein localises to the cytoplasm. The enzyme catalyses L-glutamate + NH4(+) + ATP = L-glutamine + ADP + phosphate + H(+). Catalyzes the ATP-dependent biosynthesis of glutamine from glutamate and ammonia. The chain is Glutamine synthetase from Bradyrhizobium diazoefficiens (strain JCM 10833 / BCRC 13528 / IAM 13628 / NBRC 14792 / USDA 110).